A 64-amino-acid polypeptide reads, in one-letter code: Phylloxin-B1 (64 aa).

The N-terminal stretch at Met-1 to Cys-22 is a signal peptide. A propeptide spanning residues Glu-23–Glu-42 is cleaved from the precursor. Gln-63 is subject to Glutamine amide.

In terms of tissue distribution, expressed by the skin glands.

It is found in the secreted. Functionally, antimicrobial peptide against the wall-less bacteria A.laidlawii and S.melliferum, the Gram-positive bacteria B.megaterium KM, C.glutamicum ATCC 27853 and M.luteus ATCC 27853 and the Gram-negative-bacteria R.meliloti 102F34 and E.coli K12. This is Phylloxin-B1 from Phyllomedusa bicolor (Two-colored leaf frog).